We begin with the raw amino-acid sequence, 327 residues long: Lipoyl synthase (327 aa).

[4Fe-4S] cluster is bound by residues Cys-74, Cys-79, Cys-85, Cys-100, Cys-104, Cys-107, and Ser-314. Positions 86–303 (FSGGTATFMI…AEEGEKMGFK (218 aa)) constitute a Radical SAM core domain.

This sequence belongs to the radical SAM superfamily. Lipoyl synthase family. [4Fe-4S] cluster is required as a cofactor.

It is found in the cytoplasm. The catalysed reaction is [[Fe-S] cluster scaffold protein carrying a second [4Fe-4S](2+) cluster] + N(6)-octanoyl-L-lysyl-[protein] + 2 oxidized [2Fe-2S]-[ferredoxin] + 2 S-adenosyl-L-methionine + 4 H(+) = [[Fe-S] cluster scaffold protein] + N(6)-[(R)-dihydrolipoyl]-L-lysyl-[protein] + 4 Fe(3+) + 2 hydrogen sulfide + 2 5'-deoxyadenosine + 2 L-methionine + 2 reduced [2Fe-2S]-[ferredoxin]. Its pathway is protein modification; protein lipoylation via endogenous pathway; protein N(6)-(lipoyl)lysine from octanoyl-[acyl-carrier-protein]: step 2/2. Its function is as follows. Catalyzes the radical-mediated insertion of two sulfur atoms into the C-6 and C-8 positions of the octanoyl moiety bound to the lipoyl domains of lipoate-dependent enzymes, thereby converting the octanoylated domains into lipoylated derivatives. This Pseudomonas aeruginosa (strain LESB58) protein is Lipoyl synthase.